The primary structure comprises 309 residues: uncharacterized protein (309 aa).

An S4 RNA-binding domain is found at 11-87 (QRLDTFLATL…FPLDILYEDE (77 aa)). The active site involves D131.

This sequence belongs to the pseudouridine synthase RluA family.

The enzyme catalyses a uridine in RNA = a pseudouridine in RNA. This is an uncharacterized protein from Mycoplasma pneumoniae (strain ATCC 29342 / M129 / Subtype 1) (Mycoplasmoides pneumoniae).